The chain runs to 75 residues: Protein Tlp homolog (75 aa).

Residues 53-75 form a disordered region; the sequence is REALDGMREEIKDEARDKKNGYM.

Belongs to the Tlp family.

The chain is Protein Tlp homolog from Clostridium botulinum (strain Langeland / NCTC 10281 / Type F).